Here is a 152-residue protein sequence, read N- to C-terminus: D-aminoacyl-tRNA deacylase (152 aa).

The short motif at 138 to 139 (GP) is the Gly-cisPro motif, important for rejection of L-amino acids element.

Belongs to the DTD family. In terms of assembly, homodimer.

The protein resides in the cytoplasm. It catalyses the reaction glycyl-tRNA(Ala) + H2O = tRNA(Ala) + glycine + H(+). It carries out the reaction a D-aminoacyl-tRNA + H2O = a tRNA + a D-alpha-amino acid + H(+). In terms of biological role, an aminoacyl-tRNA editing enzyme that deacylates mischarged D-aminoacyl-tRNAs. Also deacylates mischarged glycyl-tRNA(Ala), protecting cells against glycine mischarging by AlaRS. Acts via tRNA-based rather than protein-based catalysis; rejects L-amino acids rather than detecting D-amino acids in the active site. By recycling D-aminoacyl-tRNA to D-amino acids and free tRNA molecules, this enzyme counteracts the toxicity associated with the formation of D-aminoacyl-tRNA entities in vivo and helps enforce protein L-homochirality. In Chloroherpeton thalassium (strain ATCC 35110 / GB-78), this protein is D-aminoacyl-tRNA deacylase.